The following is a 349-amino-acid chain: Succinylglutamate desuccinylase (349 aa).

Positions 70, 73, and 166 each coordinate Zn(2+). Glutamate 229 is a catalytic residue.

This sequence belongs to the AspA/AstE family. Succinylglutamate desuccinylase subfamily. Zn(2+) is required as a cofactor.

The catalysed reaction is N-succinyl-L-glutamate + H2O = L-glutamate + succinate. It participates in amino-acid degradation; L-arginine degradation via AST pathway; L-glutamate and succinate from L-arginine: step 5/5. Functionally, transforms N(2)-succinylglutamate into succinate and glutamate. This chain is Succinylglutamate desuccinylase, found in Burkholderia thailandensis (strain ATCC 700388 / DSM 13276 / CCUG 48851 / CIP 106301 / E264).